Here is a 507-residue protein sequence, read N- to C-terminus: Probable DNA ligase (507 aa).

Glu209 is an ATP binding site. The active-site N6-AMP-lysine intermediate is Lys211. ATP is bound by residues Arg216, Arg231, Glu260, Phe300, Arg372, and Lys378.

This sequence belongs to the ATP-dependent DNA ligase family. Requires Mg(2+) as cofactor.

It carries out the reaction ATP + (deoxyribonucleotide)n-3'-hydroxyl + 5'-phospho-(deoxyribonucleotide)m = (deoxyribonucleotide)n+m + AMP + diphosphate.. In terms of biological role, DNA ligase that seals nicks in double-stranded DNA during DNA replication, DNA recombination and DNA repair. The polypeptide is Probable DNA ligase (Mycobacterium bovis (strain ATCC BAA-935 / AF2122/97)).